The primary structure comprises 119 residues: uncharacterized protein (119 aa).

A helical membrane pass occupies residues 74–91 (LSVHFLLNVISAILSMLI).

The protein resides in the membrane. This is an uncharacterized protein from Schizosaccharomyces pombe (strain 972 / ATCC 24843) (Fission yeast).